The following is a 419-amino-acid chain: Tyrosine--tRNA ligase (419 aa).

L-tyrosine is bound at residue Tyr-42. Residues 47–56 carry the 'HIGH' region motif; that stretch reads ATAPSLHVGS. Residues Tyr-179 and Gln-183 each contribute to the L-tyrosine site. Positions 239–243 match the 'KMSKS' region motif; the sequence is KMGKT. Position 242 (Lys-242) interacts with ATP. In terms of domain architecture, S4 RNA-binding spans 353 to 418; it reads VVLAALFADA…GKKKIVLVKP (66 aa).

Belongs to the class-I aminoacyl-tRNA synthetase family. TyrS type 1 subfamily. As to quaternary structure, homodimer.

Its subcellular location is the cytoplasm. It catalyses the reaction tRNA(Tyr) + L-tyrosine + ATP = L-tyrosyl-tRNA(Tyr) + AMP + diphosphate + H(+). Catalyzes the attachment of tyrosine to tRNA(Tyr) in a two-step reaction: tyrosine is first activated by ATP to form Tyr-AMP and then transferred to the acceptor end of tRNA(Tyr). In Caulobacter vibrioides (strain ATCC 19089 / CIP 103742 / CB 15) (Caulobacter crescentus), this protein is Tyrosine--tRNA ligase.